Consider the following 384-residue polypeptide: Mannitol-1-phosphate 5-dehydrogenase (384 aa).

3–14 (AVHFGAGNIGRG) contributes to the NAD(+) binding site.

This sequence belongs to the mannitol dehydrogenase family.

It carries out the reaction D-mannitol 1-phosphate + NAD(+) = beta-D-fructose 6-phosphate + NADH + H(+). The sequence is that of Mannitol-1-phosphate 5-dehydrogenase from Arthrobacter sp. (strain FB24).